We begin with the raw amino-acid sequence, 172 residues long: Small ribosomal subunit protein bS6 (172 aa).

The tract at residues 100 to 172 (LPAKRVVKTS…ENKEIEKKED (73 aa)) is disordered. The span at 107 to 172 (KTSEKNVKED…ENKEIEKKED (66 aa)) shows a compositional bias: basic and acidic residues.

This sequence belongs to the bacterial ribosomal protein bS6 family.

Binds together with bS18 to 16S ribosomal RNA. This Prochlorococcus marinus (strain MIT 9211) protein is Small ribosomal subunit protein bS6.